The following is a 514-amino-acid chain: DNA-(apurinic or apyrimidinic site) endonuclease 2 (514 aa).

Mg(2+)-binding residues include asparagine 8 and glutamate 48. Tyrosine 156 is a catalytic residue. Aspartate 197, asparagine 199, aspartate 303, and histidine 304 together coordinate Mg(2+). Aspartate 197 (proton donor/acceptor) is an active-site residue. Histidine 304 acts as the Proton acceptor in catalysis. Positions 359 to 417 are disordered; it reads PSNQTQVHMRKNKARVRSTRSRPSKTGSSRGQKNLMSYFQPSSSGPQTSNLDLPSLGTL. The segment covering 366 to 381 has biased composition (basic residues); it reads HMRKNKARVRSTRSRP. Lysine 371 is covalently cross-linked (Glycyl lysine isopeptide (Lys-Gly) (interchain with G-Cter in ubiquitin)). Over residues 382 to 410 the composition is skewed to polar residues; sequence SKTGSSRGQKNLMSYFQPSSSGPQTSNLD. The tract at residues 390 to 397 is required for the interaction and colocalization with PCNA in nuclear foci in presence of oxidative-induced DNA damaging agents; it reads QKNLMSYF. Residues cysteine 465, histidine 468, cysteine 491, and cysteine 505 each coordinate Zn(2+). The segment at 465 to 514 adopts a GRF-type zinc-finger fold; that stretch reads CGGHREPCVMRTVKKPGPNLGRHFYMCARPQGPPTDPSSRCNFFLWSRPS.

The protein belongs to the DNA repair enzymes AP/ExoA family. In terms of assembly, interacts with PCNA; this interaction is triggered by reactive oxygen species and increased by misincorporation of uracil in nuclear DNA. The cofactor is Mg(2+). Requires Mn(2+) as cofactor. In terms of processing, ubiquitinated by the CUL9-RBX1 complex. Ubiquitinated by MKRN3 at Lys-371 leading to proteasomal degradation.

The protein localises to the nucleus. It is found in the cytoplasm. Its subcellular location is the mitochondrion. It catalyses the reaction Exonucleolytic cleavage in the 3'- to 5'-direction to yield nucleoside 5'-phosphates.. With respect to regulation, 3'-5' exonuclease activity is activated by sodium and manganese. 3'-5' exonuclease and 3'-phosphodiesterase activities are stimulated in presence of PCNA. In terms of biological role, functions as a weak apurinic/apyrimidinic (AP) endodeoxyribonuclease in the DNA base excision repair (BER) pathway of DNA lesions induced by oxidative and alkylating agents. Initiates repair of AP sites in DNA by catalyzing hydrolytic incision of the phosphodiester backbone immediately adjacent to the damage, generating a single-strand break with 5'-deoxyribose phosphate and 3'-hydroxyl ends. Also displays double-stranded DNA 3'-5' exonuclease, 3'-phosphodiesterase activities. Shows robust 3'-5' exonuclease activity on 3'-recessed heteroduplex DNA and is able to remove mismatched nucleotides preferentially. Shows fairly strong 3'-phosphodiesterase activity involved in the removal of 3'-damaged termini formed in DNA by oxidative agents. In the nucleus functions in the PCNA-dependent BER pathway. Plays a role in reversing blocked 3' DNA ends, problematic lesions that preclude DNA synthesis. Required for somatic hypermutation (SHM) and DNA cleavage step of class switch recombination (CSR) of immunoglobulin genes. Required for proper cell cycle progression during proliferation of peripheral lymphocytes. This Bos taurus (Bovine) protein is DNA-(apurinic or apyrimidinic site) endonuclease 2 (APEX2).